The chain runs to 178 residues: MTVSDHPQTVSQPDPESESRPSKTRLKQEMHALQALGERLVELEPARIAELDLPEKLAEALLEARKITSHGARRRHLQFIGKLMRAVDPLPVQEKLDAWQHTGMRHTAWLHQLERWRDRLISDETAVTEFVQTYPHTDVRQLRTLLRNIEKEKLAGKPPHNFRALFQLLRQIIPEIPG.

Residues 1-14 (MTVSDHPQTVSQPD) are compositionally biased toward polar residues. Residues 1–25 (MTVSDHPQTVSQPDPESESRPSKTR) are disordered.

It belongs to the DarP family.

The protein localises to the cytoplasm. Its function is as follows. Member of a network of 50S ribosomal subunit biogenesis factors which assembles along the 30S-50S interface, preventing incorrect 23S rRNA structures from forming. Promotes peptidyl transferase center (PTC) maturation. In Nitrosomonas europaea (strain ATCC 19718 / CIP 103999 / KCTC 2705 / NBRC 14298), this protein is Dual-action ribosomal maturation protein DarP.